The primary structure comprises 1681 residues: Meiosis regulator and mRNA stability factor 1 (1681 aa).

Residues 340–477 (IGVFWDIENC…ALLHHAHELI (138 aa)) enclose the NYN domain. Disordered regions lie at residues 576–595 (VNET…PKKV) and 638–717 (QMQS…DVVF). Over residues 638-647 (QMQSKSNKTS) the composition is skewed to polar residues. Basic and acidic residues predominate over residues 648-658 (QQEKDKKRNGD). The span at 659–690 (KQGTLSQSSPLCTNQMLQTARNVGTDNTASKS) shows a compositional bias: polar residues. A compositionally biased stretch (basic and acidic residues) spans 692–715 (QKRDDTTRKSNADSQKEQKNKEDV). The RRM domain maps to 779–858 (ADIQIGNLDY…KRIQVSLATG (80 aa)). HTH OST-type domains lie at 863 to 937 (SLSL…SPMG), 991 to 1067 (SLKT…HNKP), 1087 to 1161 (QLIQ…LTHR), 1163 to 1238 (QVKR…IPKR), 1247 to 1321 (RTKQ…LTEM), 1323 to 1398 (RIKA…INRK), 1399 to 1472 (SLRS…SVQL), and 1474 to 1548 (SLYV…LKND). The span at 1637–1648 (EPSTQNICPQES) shows a compositional bias: polar residues. Residues 1637–1662 (EPSTQNICPQESKSTKELPESPVKRQ) are disordered. The span at 1649–1659 (KSTKELPESPV) shows a compositional bias: basic and acidic residues.

It is found in the peroxisome. Essential regulator of oogenesis required for female meiotic progression to repress transposable elements and preventing their mobilization, which is essential for the germline integrity. The sequence is that of Meiosis regulator and mRNA stability factor 1 from Xenopus tropicalis (Western clawed frog).